The sequence spans 722 residues: Zinc finger protein 600 (722 aa).

A C2H2-type 1; degenerate zinc finger spans residues Phe-162 to His-184. 9 consecutive C2H2-type zinc fingers follow at residues Tyr-190–His-212, Tyr-218–His-240, His-246–His-268, Tyr-274–His-296, Tyr-302–His-324, Tyr-330–His-352, Tyr-358–His-380, Tyr-386–His-408, and Tyr-414–His-436. Residues Tyr-442–His-464 form a C2H2-type 11; degenerate zinc finger. 9 consecutive C2H2-type zinc fingers follow at residues Tyr-470 to His-492, Tyr-498 to His-520, Tyr-526 to His-548, Tyr-554 to His-576, Tyr-582 to His-604, Tyr-610 to His-632, Tyr-638 to His-660, Tyr-666 to His-688, and Tyr-694 to His-716.

The protein belongs to the krueppel C2H2-type zinc-finger protein family.

The protein resides in the nucleus. Functionally, may be involved in transcriptional regulation. This Homo sapiens (Human) protein is Zinc finger protein 600 (ZNF600).